Reading from the N-terminus, the 32-residue chain is ADPTPVSVSGGTIHFEGKLVNAAAXVSXXSAD.

It is found in the fimbrium. This Salmonella enteritidis protein is Fimbrin sef21.